The sequence spans 214 residues: RNA-binding protein 38 (214 aa).

Positions 11-88 (TKIFVGGLPY…RKANVNLAYL (78 aa)) constitute an RRM domain.

Belongs to the RBM38 family. As to expression, strongly expressed in the nervous system. Expressed at early neurula stages of development.

It is found in the cytoplasm. The protein localises to the cytosol. The protein resides in the nucleus. RNA-binding protein that specifically bind the 3'-UTR of VegT transcripts, leading to maintain their stability and stimulate their translation, thereby playing a role in germ layer formation. VegT is a localized maternal determinant essentially required for endoderm formation. Also has some proneural function in the open neural plate and in the context of retinogenesis. May also act as a mRNA splicing factor. May play a role in myogenic differentiation. The polypeptide is RNA-binding protein 38 (rbm38) (Xenopus laevis (African clawed frog)).